The sequence spans 290 residues: Lipoyl synthase (290 aa).

Residues Cys36, Cys41, Cys47, Cys62, Cys66, Cys69, and Ser275 each coordinate [4Fe-4S] cluster. A Radical SAM core domain is found at 48–264 (FSKKTATFMI…KEEALKIGFS (217 aa)).

This sequence belongs to the radical SAM superfamily. Lipoyl synthase family. [4Fe-4S] cluster is required as a cofactor.

The protein localises to the cytoplasm. The enzyme catalyses [[Fe-S] cluster scaffold protein carrying a second [4Fe-4S](2+) cluster] + N(6)-octanoyl-L-lysyl-[protein] + 2 oxidized [2Fe-2S]-[ferredoxin] + 2 S-adenosyl-L-methionine + 4 H(+) = [[Fe-S] cluster scaffold protein] + N(6)-[(R)-dihydrolipoyl]-L-lysyl-[protein] + 4 Fe(3+) + 2 hydrogen sulfide + 2 5'-deoxyadenosine + 2 L-methionine + 2 reduced [2Fe-2S]-[ferredoxin]. It participates in protein modification; protein lipoylation via endogenous pathway; protein N(6)-(lipoyl)lysine from octanoyl-[acyl-carrier-protein]: step 2/2. Functionally, catalyzes the radical-mediated insertion of two sulfur atoms into the C-6 and C-8 positions of the octanoyl moiety bound to the lipoyl domains of lipoate-dependent enzymes, thereby converting the octanoylated domains into lipoylated derivatives. The polypeptide is Lipoyl synthase (Alkaliphilus metalliredigens (strain QYMF)).